The chain runs to 660 residues: Bifunctional polymyxin resistance protein ArnA (660 aa).

The segment at 1–304 is formyltransferase ArnAFT; sequence MKAIVFAYHD…DMSMVTDVRV (304 aa). Catalysis depends on His104, which acts as the Proton donor; for formyltransferase activity. Residues Arg114 and 136-140 contribute to the (6R)-10-formyltetrahydrofolate site; that span reads VLKPD. Residues 314-660 form a dehydrogenase ArnADH region; it reads HRKRVLILGV…RGAVEELGKN (347 aa). NAD(+)-binding positions include Asp347 and 368–369; that span reads DI. UDP-alpha-D-glucuronate contacts are provided by residues Ala393, Tyr398, and 432–433; that span reads TS. Glu434 functions as the Proton acceptor; for decarboxylase activity in the catalytic mechanism. UDP-alpha-D-glucuronate-binding positions include Arg460, Asn492, 526–535, and Tyr613; that span reads KLVDGGEQKR. The active-site Proton donor; for decarboxylase activity is the Arg619.

This sequence in the N-terminal section; belongs to the Fmt family. UDP-L-Ara4N formyltransferase subfamily. The protein in the C-terminal section; belongs to the NAD(P)-dependent epimerase/dehydratase family. UDP-glucuronic acid decarboxylase subfamily. As to quaternary structure, homohexamer, formed by a dimer of trimers.

The enzyme catalyses UDP-alpha-D-glucuronate + NAD(+) = UDP-beta-L-threo-pentopyranos-4-ulose + CO2 + NADH. It catalyses the reaction UDP-4-amino-4-deoxy-beta-L-arabinose + (6R)-10-formyltetrahydrofolate = UDP-4-deoxy-4-formamido-beta-L-arabinose + (6S)-5,6,7,8-tetrahydrofolate + H(+). Its pathway is nucleotide-sugar biosynthesis; UDP-4-deoxy-4-formamido-beta-L-arabinose biosynthesis; UDP-4-deoxy-4-formamido-beta-L-arabinose from UDP-alpha-D-glucuronate: step 1/3. It participates in nucleotide-sugar biosynthesis; UDP-4-deoxy-4-formamido-beta-L-arabinose biosynthesis; UDP-4-deoxy-4-formamido-beta-L-arabinose from UDP-alpha-D-glucuronate: step 3/3. The protein operates within bacterial outer membrane biogenesis; lipopolysaccharide biosynthesis. In terms of biological role, bifunctional enzyme that catalyzes the oxidative decarboxylation of UDP-glucuronic acid (UDP-GlcUA) to UDP-4-keto-arabinose (UDP-Ara4O) and the addition of a formyl group to UDP-4-amino-4-deoxy-L-arabinose (UDP-L-Ara4N) to form UDP-L-4-formamido-arabinose (UDP-L-Ara4FN). The modified arabinose is attached to lipid A and is required for resistance to polymyxin and cationic antimicrobial peptides. The protein is Bifunctional polymyxin resistance protein ArnA of Photorhabdus laumondii subsp. laumondii (strain DSM 15139 / CIP 105565 / TT01) (Photorhabdus luminescens subsp. laumondii).